The chain runs to 21 residues: Japonicin-2 (21 aa).

C14 and C21 are joined by a disulfide.

As to expression, expressed by the skin glands.

It is found in the secreted. Its function is as follows. Antibacterial activity against the Gram-negative bacterium E.coli and the Gram-positive bacterium S.aureus. This Rana japonica (Japanese reddish frog) protein is Japonicin-2.